Reading from the N-terminus, the 226-residue chain is Large ribosomal subunit protein mL67 (226 aa).

It belongs to the mitochondrion-specific ribosomal protein mL67 family. Component of the mitochondrial large ribosomal subunit (mt-LSU). Mature yeast 74S mitochondrial ribosomes consist of a small (37S) and a large (54S) subunit. The 37S small subunit contains a 15S ribosomal RNA (15S mt-rRNA) and 34 different proteins. The 54S large subunit contains a 21S rRNA (21S mt-rRNA) and 46 different proteins.

Its subcellular location is the nucleus. The protein localises to the mitochondrion. Its function is as follows. Component of the mitochondrial ribosome (mitoribosome), a dedicated translation machinery responsible for the synthesis of mitochondrial genome-encoded proteins, including at least some of the essential transmembrane subunits of the mitochondrial respiratory chain. The mitoribosomes are attached to the mitochondrial inner membrane and translation products are cotranslationally integrated into the membrane. mL67/MHR1 also has extraribosomal functions, being involved in regulation of mitochondrial DNA recombination, maintenance and repair, and generation of homoplasmic cells. mL67/MHR1 also acts as transcription factor involved in regulation of RNA polymerase II-dependent transcription. The protein is Large ribosomal subunit protein mL67 (MHR1) of Saccharomyces cerevisiae (strain ATCC 204508 / S288c) (Baker's yeast).